We begin with the raw amino-acid sequence, 325 residues long: D-alanine--D-alanine ligase (325 aa).

The region spanning lysine 109–glutamate 309 is the ATP-grasp domain. Cysteine 136–glutamate 191 serves as a coordination point for ATP. Mg(2+)-binding residues include aspartate 262, glutamate 276, and asparagine 278.

This sequence belongs to the D-alanine--D-alanine ligase family. Mg(2+) serves as cofactor. Requires Mn(2+) as cofactor.

The protein localises to the cytoplasm. The enzyme catalyses 2 D-alanine + ATP = D-alanyl-D-alanine + ADP + phosphate + H(+). It functions in the pathway cell wall biogenesis; peptidoglycan biosynthesis. Its function is as follows. Cell wall formation. This chain is D-alanine--D-alanine ligase, found in Solibacter usitatus (strain Ellin6076).